Consider the following 1294-residue polypeptide: Ethylene-insensitive protein 2 (1294 aa).

Residues 1 to 12 (MEAEIVNVRPQL) lie on the Cytoplasmic side of the membrane. The chain crosses the membrane as a helical span at residues 13–33 (GFIQRMVPALLPVLLVSVGYI). At 34–50 (DPGKWVANIEGGARFGY) the chain is on the extracellular side. The helical transmembrane segment at 51–71 (DLVAITLLFNFAAILCQYVAA) threads the bilayer. Over 72–105 (RISVVTGKHLAQICNEEYDKWTCMFLGIQAEFSA) the chain is Cytoplasmic. A helical transmembrane segment spans residues 106–126 (ILLDLTMVVGVAHALNLLFGV). Position 127 (glutamate 127) is a topological domain, extracellular. A helical transmembrane segment spans residues 128 to 148 (LSTGVFLAAMDAFLFPVFASF). Residues 149 to 155 (LENGMAN) are Cytoplasmic-facing. A helical membrane pass occupies residues 156–176 (TVSIYSAGLVLLLYVSGVLLS). At 177–194 (QSEIPLSMNGVLTRLNGE) the chain is on the extracellular side. A helical membrane pass occupies residues 195–215 (SAFALMGLLGASIVPHNFYIH). Over 216-237 (SYFAGESTSSSDVDKSSLCQDH) the chain is Cytoplasmic. A helical transmembrane segment spans residues 238–258 (LFAIFGVFSGLSLVNYVLMNA). The Extracellular portion of the chain corresponds to 259 to 287 (AANVFHSTGLVVLTFHDALSLMEQVFMSP). Residues 288–308 (LIPVVFLMLLFFSSQITALAW) form a helical membrane-spanning segment. At 309 to 334 (AFGGEVVLHDFLKIEIPAWLHRATIR) the chain is on the cytoplasmic side. 2 consecutive transmembrane segments (helical) span residues 335-355 (ILAV…GIYQ) and 356-376 (LLIF…IPLF). The Cytoplasmic segment spans residues 377–397 (RIASSRQIMGVHKIPQVGEFL). Residues 398–418 (ALTTFLGFLGLNVVFVVEMVF) form a helical membrane-spanning segment. The Extracellular portion of the chain corresponds to 419-440 (GSSDWAGGLRWNTVMGTSIQYT). The helical transmembrane segment at 441–461 (TLLVSSCASLCLILWLAATPL) threads the bilayer. Over 462 to 1294 (KSASNRAEAQ…KNVTAYGSLG (833 aa)) the chain is Cytoplasmic. Disordered stretches follow at residues 534 to 561 (TDQE…SSLK) and 623 to 662 (ETEE…SLSR). Basic and acidic residues predominate over residues 536–550 (QEIRSSPPEERELDV). A phosphoserine mark is found at serine 645, serine 659, and serine 757. Residue threonine 819 is modified to Phosphothreonine. Serine 924 is subject to Phosphoserine. The short motif at 1262 to 1269 (LKRYKRRL) is the Nuclear localization signal element. Residues 1269-1294 (LSNKPVGMNQDGPGSRKNVTAYGSLG) are disordered. A Phosphoserine modification is found at serine 1283.

The protein belongs to the NRAMP (TC 2.A.55) family. Interacts (via NLS) with ETR1. Interacts (via C-terminus) with EER5 and the COP9 signalosome subunits CSN3, CSN6A and CSN6B. Interacts with ETP1 and ETP2. Interacts with CTR1. Interacts with all members of the ethylene receptor family, including ETR1, ETR2, ERS1, ERS2 and EIN4. Binds to MRF3/ECIP1. In terms of assembly, interacts with several P-body components, such as XRN4/EIN5, PAB2, PAB4 and PAB8. Binds to ENAP1 in the presence of ethylene; this reaction facilitates its association with histone. In terms of processing, phosphorylated by CTR1 on at least 4 sites. Phosphorylation of Ser-645 and Ser-924 is involved in repressing EIN2 signaling. Loss of phosphorylation results in nuclear localization of the C-terminus of EIN2. In terms of tissue distribution, localized to the guard cells after methyl jasmonate treatment.

Its subcellular location is the endoplasmic reticulum membrane. It is found in the nucleus. The protein resides in the cytoplasm. Central factor in signaling pathways regulated by ethylene (ET) and involved in various processes including development, plant defense, senescence, nucleotide sugar flux, and tropisms. Necessary for ethylene-mediated gene regulation, and for the induction of some genes by ozone. Acts downstream of ET receptors, and upstream of ethylene regulated transcription factors. Required for cytokinin-mediated processes. Seems to be implicated in cross-talk between ET, jasmonate and other pathways. Probably not involved in iron uptake. Has a short half-life and undergoes rapid proteasome-mediated turnover in the absence of ethylene. Required for ethylene-induced EIN3 stabilization via proteasomal degradation of EBF1/EBF2 proteins. Regulates the leaf senescence induced by methyl jasmonate, ethylene and abscisic acid. Required during salt stress to confer resistance. Functionally, trafficking signal inducing ethylene response. The nuclear localization is both necessary and sufficient to activate EIN3-mediated transcription and ethylene responses. Involved in ethylene (ET)-mediated signaling pathways by triggering histone acetylation of H3K14 and H3K23 in an ENAP1-dependent manner, thus influencing the expression of ethylene-responsive genes. Necessary and sufficient for 3'-UTR-mediated translational repression of EBF1 and EBF2 mRNAs. Ethylene induces EIN2-CEND to associate with 3' UTRs in cytoplasmic foci and target EBF1/2 mRNAs to cytoplasmic processing-body (P-body). MPK6 regulates the cleavage and nuclear translocation of EIN2-CEND under methyl jasmonate treatment. Required for EIN3 accumulation. The chain is Ethylene-insensitive protein 2 from Arabidopsis thaliana (Mouse-ear cress).